The following is a 51-amino-acid chain: Small ribosomal subunit protein eS31 (51 aa).

Cys21, Cys24, Cys39, and Cys42 together coordinate Zn(2+). The C4-type zinc-finger motif lies at 21–42 (CPRCGPGVFLAEHEDRFSCGRC).

It belongs to the eukaryotic ribosomal protein eS31 family. In terms of assembly, part of the 30S ribosomal subunit. Zn(2+) serves as cofactor.

The polypeptide is Small ribosomal subunit protein eS31 (Picrophilus torridus (strain ATCC 700027 / DSM 9790 / JCM 10055 / NBRC 100828 / KAW 2/3)).